A 430-amino-acid chain; its full sequence is Ribosomal protein uS12 methylthiotransferase RimO (430 aa).

Residues 2–119 (ISVYSISLGC…WPAMLAHALK (118 aa)) enclose the MTTase N-terminal domain. Cys11, Cys46, Cys81, Cys145, Cys149, and Cys152 together coordinate [4Fe-4S] cluster. In terms of domain architecture, Radical SAM core spans 131-361 (STGPSYAWLK…MEVQAEISEE (231 aa)). Residues 364 to 430 (AVHEGTRQQV…TRTYDLVALV (67 aa)) enclose the TRAM domain.

The protein belongs to the methylthiotransferase family. RimO subfamily. It depends on [4Fe-4S] cluster as a cofactor.

It localises to the cytoplasm. It catalyses the reaction L-aspartate(89)-[ribosomal protein uS12]-hydrogen + (sulfur carrier)-SH + AH2 + 2 S-adenosyl-L-methionine = 3-methylsulfanyl-L-aspartate(89)-[ribosomal protein uS12]-hydrogen + (sulfur carrier)-H + 5'-deoxyadenosine + L-methionine + A + S-adenosyl-L-homocysteine + 2 H(+). Catalyzes the methylthiolation of an aspartic acid residue of ribosomal protein uS12. The sequence is that of Ribosomal protein uS12 methylthiotransferase RimO from Nitratidesulfovibrio vulgaris (strain DP4) (Desulfovibrio vulgaris).